A 250-amino-acid polypeptide reads, in one-letter code: Transcriptional activator protein ExpR (250 aa).

In terms of domain architecture, HTH luxR-type spans 173–238; the sequence is KSQEADLFSQ…HAIRLGVEMN (66 aa). Positions 197-216 form a DNA-binding region, H-T-H motif; sequence YQEIALILGITTSTVKFHIG.

The protein belongs to the autoinducer-regulated transcriptional regulatory protein family.

Functionally, functions as an OHLL responsive transcriptional regulator that acts in virulence (soft rot disease) through the activation of genes for plant tissue macerating enzymes. The chain is Transcriptional activator protein ExpR (expR) from Dickeya dadantii (strain 3937) (Erwinia chrysanthemi (strain 3937)).